The chain runs to 149 residues: Calmodulin (149 aa).

Residue alanine 2 is modified to N-acetylalanine. 4 consecutive EF-hand domains span residues 8–43, 44–79, 81–116, and 117–149; these read EQIS…LGQN, PTEA…KLKD, DTEE…LGEK, and LTNE…MIAK. Residues aspartate 21, aspartate 23, aspartate 25, threonine 27, glutamate 32, aspartate 57, aspartate 59, asparagine 61, threonine 63, glutamate 68, aspartate 94, aspartate 96, aspartate 98, tyrosine 100, glutamate 105, aspartate 130, aspartate 132, aspartate 134, glutamine 136, and glutamate 141 each coordinate Ca(2+).

Belongs to the calmodulin family.

Its subcellular location is the cytoplasm. Its function is as follows. Calmodulin mediates the control of a large number of enzymes, ion channels and other proteins by Ca(2+). Among the enzymes to be stimulated by the calmodulin-Ca(2+) complex are a number of protein kinases and phosphatases. In Plasmodium falciparum (isolate 3D7), this protein is Calmodulin.